The chain runs to 735 residues: Glycogen [starch] synthase, muscle (735 aa).

Position 8 is a phosphoserine; by AMPK and PKA (S8). S11 is subject to Phosphoserine. K39 contacts UDP. UDP-alpha-D-glucose-binding residues include H205 and R211. Residues H291, E292, Q294, H297, and K301 each contribute to the alpha-D-glucose 6-phosphate site. Residue R331 coordinates UDP. R331 contributes to the UDP-alpha-D-glucose binding site. Residue S412 is modified to Phosphoserine. An alpha-D-glucose 6-phosphate-binding site is contributed by H501. Residues E510, W512, and G513 each coordinate UDP-alpha-D-glucose. Residue T515 participates in UDP binding. Residues R582 and R586 each contribute to the alpha-D-glucose 6-phosphate site. The segment at 629–735 (DATQGYRYPR…PASSLGEERN (107 aa)) is disordered. S641 carries the post-translational modification Phosphoserine; by DYRK2, GSK3-alpha, GSK3-beta and PASK. A phosphoserine; by GSK3-alpha and GSK3-beta mark is found at S645 and S649. S652 carries the post-translational modification Phosphoserine. Phosphoserine; by GSK3-alpha and GSK3-beta is present on S653. At S657 the chain carries Phosphoserine; by CK2. The span at 658 to 681 (EDEEEPRDGLPEEDGERYDEDEEA) shows a compositional bias: acidic residues. Positions 682-695 (AKDRRNIRAPEWPR) are enriched in basic and acidic residues. S698 carries the phosphoserine modification. Positions 698-735 (SCTSSSGGSKRSNSVDTSSLSTPSEPLSPASSLGEERN) are enriched in low complexity. Phosphothreonine is present on T700. Residues S709 and S711 each carry the phosphoserine modification. Phosphothreonine is present on T719. A phosphoserine mark is found at S725 and S729.

It belongs to the glycosyltransferase 3 family. In terms of assembly, part of the GYS1-GYG1 complex, a heterooctamer composed of a tetramer of GYS1 and 2 dimers of GYG1, where each GYS1 protomer binds to one GYG1 subunit (via GYG1 C-terminus); the GYS1 tetramer may dissociate from GYG1 dimers to continue glycogen polymerization on its own. In terms of processing, phosphorylation at Ser-8 is required for modification of Ser-11 by casein kinase I. Post-translationally, phosphorylated at Ser-641 by PASK, leading to inactivation; phosphorylation by PASK is inhibited by glycogen. Dephosphorylation at Ser-641 and Ser-645 by PP1 activates the enzyme. Phosphorylation at Ser-8 by AMPK inactivates the enzyme activity. Phosphorylated at Ser-641 by DYRK2, leading to inactivation. Primed phosphorylation at Ser-657 (site 5) by CSNK2A1 and CSNK2A2 is required for inhibitory phosphorylation at Ser-641 (site 3a), Ser-645 (site 3b), Ser-649 (site 3c) and Ser-653 (site 4) by GSK3A and GSK3B.

It catalyses the reaction [(1-&gt;4)-alpha-D-glucosyl](n) + UDP-alpha-D-glucose = [(1-&gt;4)-alpha-D-glucosyl](n+1) + UDP + H(+). Its pathway is glycan biosynthesis; glycogen biosynthesis. With respect to regulation, allosteric activation by glucose-6-phosphate. Phosphorylation reduces the activity towards UDP-glucose. When in the non-phosphorylated state, glycogen synthase does not require glucose-6-phosphate as an allosteric activator; when phosphorylated it does. In terms of biological role, glycogen synthase participates in the glycogen biosynthetic process along with glycogenin and glycogen branching enzyme. Extends the primer composed of a few glucose units formed by glycogenin by adding new glucose units to it. In this context, glycogen synthase transfers the glycosyl residue from UDP-Glc to the non-reducing end of alpha-1,4-glucan. The polypeptide is Glycogen [starch] synthase, muscle (Oryctolagus cuniculus (Rabbit)).